Here is a 190-residue protein sequence, read N- to C-terminus: A-type ATP synthase subunit E (190 aa).

The protein belongs to the V-ATPase E subunit family. As to quaternary structure, has multiple subunits with at least A(3), B(3), C, D, E, F, H, I and proteolipid K(x).

Its subcellular location is the cell membrane. Its function is as follows. Component of the A-type ATP synthase that produces ATP from ADP in the presence of a proton gradient across the membrane. The sequence is that of A-type ATP synthase subunit E from Pyrobaculum islandicum (strain DSM 4184 / JCM 9189 / GEO3).